We begin with the raw amino-acid sequence, 359 residues long: 3-dehydroquinate synthase (359 aa).

NAD(+) is bound by residues 71–76, 105–109, 129–130, lysine 142, lysine 151, and 169–172; these read DGEQFK, GVIGD, TT, and CLHT. Residues glutamate 184, histidine 247, and histidine 264 each contribute to the Zn(2+) site.

The protein belongs to the sugar phosphate cyclases superfamily. Dehydroquinate synthase family. It depends on Co(2+) as a cofactor. Zn(2+) is required as a cofactor. The cofactor is NAD(+).

Its subcellular location is the cytoplasm. It catalyses the reaction 7-phospho-2-dehydro-3-deoxy-D-arabino-heptonate = 3-dehydroquinate + phosphate. Its pathway is metabolic intermediate biosynthesis; chorismate biosynthesis; chorismate from D-erythrose 4-phosphate and phosphoenolpyruvate: step 2/7. In terms of biological role, catalyzes the conversion of 3-deoxy-D-arabino-heptulosonate 7-phosphate (DAHP) to dehydroquinate (DHQ). This chain is 3-dehydroquinate synthase, found in Shewanella putrefaciens (strain CN-32 / ATCC BAA-453).